The sequence spans 608 residues: Albumin (608 aa).

Residues 1 to 18 (MKWVTFLLLLFVSGSAFS) form the signal peptide. A propeptide spanning residues 19-24 (RGVFRR) is cleaved from the precursor. 3 Albumin domains span residues 19–211 (RGVF…GVKE), 212–403 (KALV…EFQP), and 404–601 (LVEE…NLVT). Histidine 27 contacts Cu cation. The residue at position 29 (serine 29) is a Phosphoserine. Ca(2+) is bound by residues glutamate 30 and aspartate 37. Cysteine 77 and cysteine 86 are joined by a disulfide. Phosphoserine occurs at positions 82 and 89. Residue histidine 91 coordinates Zn(2+). 6 cysteine pairs are disulfide-bonded: cysteine 99/cysteine 115, cysteine 114/cysteine 125, cysteine 148/cysteine 193, cysteine 192/cysteine 201, cysteine 224/cysteine 270, and cysteine 269/cysteine 277. Lysine 229 carries the post-translational modification N6-succinyllysine. Residue glutamate 268 participates in Ca(2+) binding. Residues histidine 271 and aspartate 273 each coordinate Zn(2+). The Ca(2+) site is built by aspartate 273, glutamate 276, and aspartate 279. 8 cysteine pairs are disulfide-bonded: cysteine 289–cysteine 303, cysteine 302–cysteine 313, cysteine 340–cysteine 385, cysteine 384–cysteine 393, cysteine 416–cysteine 462, cysteine 461–cysteine 472, cysteine 485–cysteine 501, and cysteine 500–cysteine 511. A Phosphoserine modification is found at serine 297. At serine 443 the chain carries Phosphoserine. Phosphothreonine is present on residues threonine 444 and threonine 446. At lysine 460 the chain carries N6-succinyllysine. The residue at position 513 (serine 513) is a Phosphoserine. Intrachain disulfides connect cysteine 538/cysteine 583 and cysteine 582/cysteine 591. Lysine 543 is subject to N6-succinyllysine. Lysine 558 carries the N6-methyllysine modification. At threonine 570 the chain carries Phosphothreonine. Lysine 588 carries the N6-succinyllysine modification.

Belongs to the ALB/AFP/VDB family. In terms of assembly, part of a complex composed of complement component C3, CLCA1/CLCA3, A2ML1/OH and ALB/serum albumin. Interacts with FCGRT; this interaction regulates ALB homeostasis. Interacts with TASOR. In plasma, occurs in a covalently-linked complex with chromophore-bound alpha-1-microglobulin; this interaction does not prevent fatty acid binding to ALB. Post-translationally, phosphorylated by FAM20C in the extracellular medium. In terms of tissue distribution, plasma. Expressed in the granular cells within the cerebellum.

Its subcellular location is the secreted. In terms of biological role, binds water, Ca(2+), Na(+), K(+), fatty acids, hormones, bilirubin and drugs. Its main function is the regulation of the colloidal osmotic pressure of blood. Major zinc transporter in plasma, typically binds about 80% of all plasma zinc. Major calcium and magnesium transporter in plasma, binds approximately 45% of circulating calcium and magnesium in plasma. Potentially has more than two calcium-binding sites and might additionally bind calcium in a non-specific manner. The shared binding site between zinc and calcium at residue Asp-273 suggests a crosstalk between zinc and calcium transport in the blood. The rank order of affinity is zinc &gt; calcium &gt; magnesium. Binds to the bacterial siderophore enterobactin and inhibits enterobactin-mediated iron uptake of E.coli from ferric transferrin, and may thereby limit the utilization of iron and growth of enteric bacteria such as E.coli. Does not prevent iron uptake by the bacterial siderophore aerobactin. This Mus musculus (Mouse) protein is Albumin (Alb).